A 913-amino-acid polypeptide reads, in one-letter code: Transient receptor potential cation channel protein painless (913 aa).

Residues Met-1 to Arg-490 are Cytoplasmic-facing. ANK repeat units lie at residues Gly-154–Ser-189, Glu-260–Ser-289, and Gly-368–Ser-397. Residues Leu-491–Thr-511 traverse the membrane as a helical segment. At Tyr-512 to Arg-523 the chain is on the extracellular side. The chain crosses the membrane as a helical span at residues Ala-524–Glu-544. At Cys-545–Tyr-555 the chain is on the cytoplasmic side. A helical membrane pass occupies residues Phe-556–Met-576. At Glu-577–Arg-586 the chain is on the extracellular side. Residues Val-587–Leu-607 traverse the membrane as a helical segment. Over Pro-608–Lys-628 the chain is Cytoplasmic. Residues Ser-629–Gly-649 traverse the membrane as a helical segment. The Extracellular portion of the chain corresponds to Lys-650–Ser-708. Positions Gln-656 to Glu-675 are disordered. A helical transmembrane segment spans residues Ile-709–Leu-729. At Leu-730 to Lys-913 the chain is on the cytoplasmic side.

This sequence belongs to the transient receptor (TC 1.A.4) family. As to expression, present in multidendritic neurons, chordotonal neurons, a subset of cells in the central nervous system and a subset of sensory neurons in the antennal-maxillary complex. Not detected in gonads and dorsal vessels (at protein level). Expressed in peripheral neurons that extend multiple branched dendrites beneath the larval epidermis, similar to vertebrate pain receptors.

Its subcellular location is the membrane. Receptor-activated non-selective cation channel involved in detection of pain sensation due to high temperature. Involved in heat nociception by being activated by noxious temperature of 38 degrees Celsius. This is Transient receptor potential cation channel protein painless (pain) from Drosophila melanogaster (Fruit fly).